Consider the following 65-residue polypeptide: Ubiquinol-cytochrome-c reductase complex assembly factor 6 (65 aa).

Over 1–9 (MPAGVSWPR) the chain is Mitochondrial matrix. The chain crosses the membrane as a helical; Signal-anchor for type II membrane protein span at residues 10-32 (YLRMFAASVLSMFAGAQVVHHYY). Residues 33–65 (RPDLSIPEIPPKPGELRTELLGLKERQMDSQKQ) are Mitochondrial intermembrane-facing.

This sequence belongs to the UQCC6 family. In terms of tissue distribution, highly expressed in skeletal and cardiac muscle (at protein level).

It is found in the mitochondrion inner membrane. In terms of biological role, required for the assembly and stability of the mitochondrial ubiquinol-cytochrome c reductase complex (complex III (CIII) or cytochrome b-c1 complex), a multisubunit transmembrane complex that is part of the mitochondrial electron transport chain (ETC) which drives oxidative phosphorylation. Mediates early complex III biogenesis. Participates in regulating the levels of electron transport chain proteins, and therefore energy supply, in response to changes in energy demand. Also required for cytochrome c oxidase complex (complex IV) assembly. In Danio rerio (Zebrafish), this protein is Ubiquinol-cytochrome-c reductase complex assembly factor 6 (uqcc6).